Consider the following 432-residue polypeptide: Peptidase B (432 aa).

Mn(2+) is bound by residues lysine 196 and aspartate 201. Lysine 208 is a catalytic residue. Positions 219, 278, and 280 each coordinate Mn(2+). Arginine 282 is an active-site residue.

This sequence belongs to the peptidase M17 family. Homohexamer. It depends on Mn(2+) as a cofactor.

The protein resides in the cytoplasm. The enzyme catalyses Release of an N-terminal amino acid, Xaa, from a peptide or arylamide. Xaa is preferably Glu or Asp but may be other amino acids, including Leu, Met, His, Cys and Gln.. In terms of biological role, probably plays an important role in intracellular peptide degradation. The sequence is that of Peptidase B from Vibrio vulnificus (strain CMCP6).